We begin with the raw amino-acid sequence, 203 residues long: Outer-membrane lipoprotein LolB (203 aa).

An N-terminal signal peptide occupies residues 1 to 17 (MNRLFRLLPLASLVLTA). A lipid anchor (N-palmitoyl cysteine) is attached at cysteine 18. A lipid anchor (S-diacylglycerol cysteine) is attached at cysteine 18.

It belongs to the LolB family. As to quaternary structure, monomer.

It localises to the cell outer membrane. Functionally, plays a critical role in the incorporation of lipoproteins in the outer membrane after they are released by the LolA protein. This is Outer-membrane lipoprotein LolB from Klebsiella pneumoniae (strain 342).